A 228-amino-acid chain; its full sequence is Deoxyribose-phosphate aldolase (228 aa).

D96 serves as the catalytic Proton donor/acceptor. The active-site Schiff-base intermediate with acetaldehyde is K157. K185 acts as the Proton donor/acceptor in catalysis.

It belongs to the DeoC/FbaB aldolase family. DeoC type 1 subfamily.

It localises to the cytoplasm. It carries out the reaction 2-deoxy-D-ribose 5-phosphate = D-glyceraldehyde 3-phosphate + acetaldehyde. It functions in the pathway carbohydrate degradation; 2-deoxy-D-ribose 1-phosphate degradation; D-glyceraldehyde 3-phosphate and acetaldehyde from 2-deoxy-alpha-D-ribose 1-phosphate: step 2/2. Its function is as follows. Catalyzes a reversible aldol reaction between acetaldehyde and D-glyceraldehyde 3-phosphate to generate 2-deoxy-D-ribose 5-phosphate. The sequence is that of Deoxyribose-phosphate aldolase from Picosynechococcus sp. (strain ATCC 27264 / PCC 7002 / PR-6) (Agmenellum quadruplicatum).